Consider the following 272-residue polypeptide: Phosphate import ATP-binding protein PstB (272 aa).

Residues 26-267 (VAARNLNFYY…PADRRTQDYI (242 aa)) form the ABC transporter domain. 58–65 (GPSGCGKS) serves as a coordination point for ATP.

The protein belongs to the ABC transporter superfamily. Phosphate importer (TC 3.A.1.7) family. As to quaternary structure, the complex is composed of two ATP-binding proteins (PstB), two transmembrane proteins (PstC and PstA) and a solute-binding protein (PstS).

The protein localises to the cell inner membrane. The catalysed reaction is phosphate(out) + ATP + H2O = ADP + 2 phosphate(in) + H(+). Functionally, part of the ABC transporter complex PstSACB involved in phosphate import. Responsible for energy coupling to the transport system. The protein is Phosphate import ATP-binding protein PstB of Nitrobacter hamburgensis (strain DSM 10229 / NCIMB 13809 / X14).